The sequence spans 405 residues: S-adenosylmethionine synthase (405 aa).

139–144 (GQGSVD) provides a ligand contact to ATP.

This sequence belongs to the AdoMet synthase 2 family. Mg(2+) serves as cofactor.

It catalyses the reaction L-methionine + ATP + H2O = S-adenosyl-L-methionine + phosphate + diphosphate. It functions in the pathway amino-acid biosynthesis; S-adenosyl-L-methionine biosynthesis; S-adenosyl-L-methionine from L-methionine: step 1/1. Catalyzes the formation of S-adenosylmethionine from methionine and ATP. The polypeptide is S-adenosylmethionine synthase (Thermococcus onnurineus (strain NA1)).